The sequence spans 123 residues: Immunoglobulin lambda variable 5-37 (123 aa).

An N-terminal signal peptide occupies residues 1-19 (MAWTPLLLLLLSHCTGSLS). The tract at residues 20-44 (QPVLTQPPSSSASPGESARLTCTLP) is framework-1. Residues 21 to 123 (PVLTQPPSSS…YCMIWPSNAS (103 aa)) enclose the Ig-like domain. Cys-41 and Cys-115 are disulfide-bonded. The tract at residues 45-53 (SDINVGSYN) is complementarity-determining-1. The tract at residues 54–70 (IYWYQQKPGSPPRYLLY) is framework-2. The complementarity-determining-2 stretch occupies residues 71–77 (YYSDSDK). The interval 78 to 115 (GQGSGVPSRFSGSKDASANTGILLISGLQSEDEADYYC) is framework-3. The complementarity-determining-3 stretch occupies residues 116 to 123 (MIWPSNAS).

In terms of assembly, immunoglobulins are composed of two identical heavy chains and two identical light chains; disulfide-linked.

The protein resides in the secreted. It is found in the cell membrane. Its function is as follows. V region of the variable domain of immunoglobulin light chains that participates in the antigen recognition. Immunoglobulins, also known as antibodies, are membrane-bound or secreted glycoproteins produced by B lymphocytes. In the recognition phase of humoral immunity, the membrane-bound immunoglobulins serve as receptors which, upon binding of a specific antigen, trigger the clonal expansion and differentiation of B lymphocytes into immunoglobulins-secreting plasma cells. Secreted immunoglobulins mediate the effector phase of humoral immunity, which results in the elimination of bound antigens. The antigen binding site is formed by the variable domain of one heavy chain, together with that of its associated light chain. Thus, each immunoglobulin has two antigen binding sites with remarkable affinity for a particular antigen. The variable domains are assembled by a process called V-(D)-J rearrangement and can then be subjected to somatic hypermutations which, after exposure to antigen and selection, allow affinity maturation for a particular antigen. This chain is Immunoglobulin lambda variable 5-37, found in Homo sapiens (Human).